The sequence spans 208 residues: Small ribosomal subunit protein uS5 (208 aa).

Residues 1-15 are compositionally biased toward polar residues; sequence MTDSNNQSPNKKTSG. Positions 1–54 are disordered; sequence MTDSNNQSPNKKTSGSSSAPPAADGRQENRRSRGEKRGGRRDRRGQERDSEWQE. Composition is skewed to basic and acidic residues over residues 25–37 and 44–54; these read GRQE…GEKR and RGQERDSEWQE. The S5 DRBM domain occupies 52–115; that stretch reads WQERVVQIRR…ADGKKHLVRV (64 aa).

Belongs to the universal ribosomal protein uS5 family. Part of the 30S ribosomal subunit. Contacts proteins S4 and S8.

In terms of biological role, with S4 and S12 plays an important role in translational accuracy. Its function is as follows. Located at the back of the 30S subunit body where it stabilizes the conformation of the head with respect to the body. The protein is Small ribosomal subunit protein uS5 of Prochlorococcus marinus (strain NATL2A).